The sequence spans 120 residues: UPF0231 protein YacL (120 aa).

It belongs to the UPF0231 family.

This Shigella flexneri protein is UPF0231 protein YacL (yacL).